The following is an 82-amino-acid chain: Cytochrome b559 subunit alpha (82 aa).

A helical transmembrane segment spans residues 21-35 (VIHSITIPALFIAGW). Residue histidine 23 participates in heme binding.

Belongs to the PsbE/PsbF family. In terms of assembly, heterodimer of an alpha subunit and a beta subunit. PSII is composed of 1 copy each of membrane proteins PsbA, PsbB, PsbC, PsbD, PsbE, PsbF, PsbH, PsbI, PsbJ, PsbK, PsbL, PsbM, PsbT, PsbX, PsbY, PsbZ, Psb30/Ycf12, peripheral proteins PsbO, CyanoQ (PsbQ), PsbU, PsbV and a large number of cofactors. It forms dimeric complexes. Requires heme b as cofactor.

The protein localises to the cellular thylakoid membrane. In terms of biological role, this b-type cytochrome is tightly associated with the reaction center of photosystem II (PSII). PSII is a light-driven water:plastoquinone oxidoreductase that uses light energy to abstract electrons from H(2)O, generating O(2) and a proton gradient subsequently used for ATP formation. It consists of a core antenna complex that captures photons, and an electron transfer chain that converts photonic excitation into a charge separation. The chain is Cytochrome b559 subunit alpha from Nostoc punctiforme (strain ATCC 29133 / PCC 73102).